The sequence spans 344 residues: CRISPR-associated endonuclease Cas1 2 (344 aa).

The Mn(2+) site is built by glutamate 167, histidine 235, and glutamate 250.

The protein belongs to the CRISPR-associated endonuclease Cas1 family. As to quaternary structure, homodimer, forms a heterotetramer with a Cas2 homodimer. Mg(2+) is required as a cofactor. The cofactor is Mn(2+).

Its function is as follows. CRISPR (clustered regularly interspaced short palindromic repeat), is an adaptive immune system that provides protection against mobile genetic elements (viruses, transposable elements and conjugative plasmids). CRISPR clusters contain spacers, sequences complementary to antecedent mobile elements, and target invading nucleic acids. CRISPR clusters are transcribed and processed into CRISPR RNA (crRNA). Acts as a dsDNA endonuclease. Involved in the integration of spacer DNA into the CRISPR cassette. The protein is CRISPR-associated endonuclease Cas1 2 of Rhodospirillum rubrum (strain ATCC 11170 / ATH 1.1.1 / DSM 467 / LMG 4362 / NCIMB 8255 / S1).